We begin with the raw amino-acid sequence, 88 residues long: Phosphocarrier protein HPr (88 aa).

The HPr domain occupies 2 to 88 (AQKTFKVTAD…ETMKSEGLGE (87 aa)). Position 12 is a phosphoserine (S12). H15 acts as the Pros-phosphohistidine intermediate; alternate in catalysis. H15 is modified (tele-phosphohistidine; alternate). S46 bears the Phosphoserine; by HPrK/P mark.

This sequence belongs to the HPr family. Post-translationally, phosphorylated during sporulation.

It localises to the cytoplasm. Phosphorylation on Ser-46 inhibits the phosphoryl transfer from enzyme I to HPr. Its function is as follows. General (non sugar-specific) component of the phosphoenolpyruvate-dependent sugar phosphotransferase system (sugar PTS). This major carbohydrate active-transport system catalyzes the phosphorylation of incoming sugar substrates concomitantly with their translocation across the cell membrane. The phosphoryl group from phosphoenolpyruvate (PEP) is transferred to the phosphoryl carrier protein HPr by enzyme I. Phospho-HPr then transfers it to the PTS EIIA domain. P-Ser-HPr interacts with the catabolite control protein A (CcpA), forming a complex that binds to DNA at the catabolite response elements cre, operator sites preceding a large number of catabolite-regulated genes. Thus, P-Ser-HPr is a corepressor in carbon catabolite repression (CCR), a mechanism that allows bacteria to coordinate and optimize the utilization of available carbon sources. P-Ser-HPr also plays a role in inducer exclusion, in which it probably interacts with several non-PTS permeases and inhibits their transport activity. This chain is Phosphocarrier protein HPr (ptsH), found in Bacillus subtilis (strain 168).